The sequence spans 495 residues: Ribose import ATP-binding protein RbsA (495 aa).

ABC transporter domains are found at residues 7-242 and 250-491; these read LEMR…VGRP and ERDI…TGVN. 39-46 serves as a coordination point for ATP; it reads GENGAGKS.

This sequence belongs to the ABC transporter superfamily. Ribose importer (TC 3.A.1.2.1) family. In terms of assembly, the complex is composed of an ATP-binding protein (RbsA), two transmembrane proteins (RbsC) and a solute-binding protein (RbsB).

Its subcellular location is the cell inner membrane. It catalyses the reaction D-ribose(out) + ATP + H2O = D-ribose(in) + ADP + phosphate + H(+). Its function is as follows. Part of the ABC transporter complex RbsABC involved in ribose import. Responsible for energy coupling to the transport system. The sequence is that of Ribose import ATP-binding protein RbsA from Shigella dysenteriae serotype 1 (strain Sd197).